The chain runs to 203 residues: Cutinase pbc1 (203 aa).

A signal peptide spans 1–18 (MKVTALGNTLTGFGQALA). Cysteine 32 and cysteine 107 are disulfide-bonded. The Nucleophile role is filled by serine 118. The cysteines at positions 166 and 173 are disulfide-linked. The active site involves histidine 170. Catalysis depends on histidine 183, which acts as the Proton donor/acceptor.

This sequence belongs to the cutinase family. In terms of processing, the 2 disulfide bonds play a critical role in holding the catalytic residues in juxta-position; reduction of the disulfide bridges results in the complete inactivation of the enzyme.

The protein resides in the secreted. It carries out the reaction cutin + H2O = cutin monomers.. Its function is as follows. Catalyzes the hydrolysis of complex carboxylic polyesters found in the cell wall of plants. Degrades cutin, a macromolecule that forms the structure of the plant cuticle. Allows pathogenic fungi to penetrate through the cuticular barrier into the host plant during the initial stage of fungal infection. This is Cutinase pbc1 from Pyrenopeziza brassicae.